The following is a 162-amino-acid chain: Caveolin-2 (162 aa).

Residues methionine 1 to lysine 86 lie on the Cytoplasmic side of the membrane. Position 19 is a phosphotyrosine; by SRC (tyrosine 19). A phosphoserine mark is found at serine 20 and serine 23. Residue tyrosine 27 is modified to Phosphotyrosine; by SRC. Phosphoserine is present on serine 36. Residues phenylalanine 87–leucine 107 constitute an intramembrane region (helical). Residues serine 108–aspartate 162 lie on the Cytoplasmic side of the membrane.

The protein belongs to the caveolin family. In terms of assembly, monomer or homodimer. Interacts with CAV1; the interaction forms a stable heterooligomeric complex that is required for targeting to lipid rafts and for caveolae formation. Tyrosine phosphorylated forms do not form heterooligomers with the Tyr-19-phosphorylated form existing as a monomer or dimer, and the Tyr-27-form as a monomer only. Interacts (tyrosine phosphorylated form) with the SH2 domain-containing proteins, RASA1, NCK1 and SRC. Interacts (tyrosine phosphorylated form) with INSR, the interaction (Tyr-27-phosphorylated form) is increased on insulin stimulation. Interacts (Tyr-19 phosphorylated form) with MAPK1 (phosphorylated form); the interaction, promoted by insulin, leads to nuclear location and MAPK1 activation. Interacts with STAT3; the interaction is increased on insulin-induced tyrosine phosphorylation leading to STAT activation. In terms of processing, phosphorylated on serine and tyrosine residues. CAV1 promotes phosphorylation on Ser-23 which then targets the complex to the plasma membrane, lipid rafts and caveolae. Phosphorylation on Ser-36 appears to modulate mitosis in endothelial cells. Phosphorylation on both Tyr-19 and Tyr-27 is required for insulin-induced 'Ser-727' phosphorylation of STAT3 and its activation. Phosphorylation on Tyr-19 is required for insulin-induced phosphorylation of MAPK1 and DNA binding of STAT3. Tyrosine phosphorylation is induced by both EGF and insulin (By. similarity).

It localises to the nucleus. It is found in the cytoplasm. The protein resides in the golgi apparatus membrane. Its subcellular location is the cell membrane. The protein localises to the membrane. It localises to the caveola. Functionally, may act as a scaffolding protein within caveolar membranes. Interacts directly with G-protein alpha subunits and can functionally regulate their activity. Acts as an accessory protein in conjunction with CAV1 in targeting to lipid rafts and driving caveolae formation. The Ser-36 phosphorylated form has a role in modulating mitosis in endothelial cells. Positive regulator of cellular mitogenesis of the MAPK signaling pathway. Required for the insulin-stimulated nuclear translocation and activation of MAPK1 and STAT3, and the subsequent regulation of cell cycle progression. This Pan troglodytes (Chimpanzee) protein is Caveolin-2 (CAV2).